A 334-amino-acid polypeptide reads, in one-letter code: MSAAILSMLGRQSAQPWANGSLLVIHPGGGELSALPNASAWSFHAGHAAYWKAAGRPVFCQIQPPNLSHYDGVLFLVAKEKELNQYLLEQLASLPTGTPVWFAGEKRSGIQPLMKHLPAWLQPPQKLASANHCLLFASERNEQVHQSASIEDYAKNITYELNQQQESFVTLPGVFSREHIDPATLLLLQHIKDLPKGRGMDFACGAGVIAKQLASVATELMACDVSPIAIAASEITLANEPVKTELRLADGIPDNAGQFDFIVSNPPFHTGQRTDYEIAREFISNARQHLNKQGVFRVVANRFLPWPEVIESVFGNCSVIADDGRYRVYHATCR.

It belongs to the methyltransferase superfamily. RsmC family. Monomer.

It is found in the cytoplasm. It catalyses the reaction guanosine(1207) in 16S rRNA + S-adenosyl-L-methionine = N(2)-methylguanosine(1207) in 16S rRNA + S-adenosyl-L-homocysteine + H(+). Functionally, specifically methylates the guanine in position 1207 of 16S rRNA in the 30S particle. The chain is Ribosomal RNA small subunit methyltransferase C from Idiomarina loihiensis (strain ATCC BAA-735 / DSM 15497 / L2-TR).